We begin with the raw amino-acid sequence, 805 residues long: Transforming acidic coiled-coil-containing protein 1 (805 aa).

At Ala-2 the chain carries N-acetylalanine. The N-myristoyl glycine moiety is linked to residue Ala-2. An interaction with LSM7 and SNRPG region spans residues 2–55; that stretch reads AFSPWQILSPVQWAKWTWSAVRGGAAGEDEAGGPEGDPEEEDSQAETKSLSFSS. A phosphoserine mark is found at Ser-4, Ser-10, and Ser-44. The disordered stretch occupies residues 23 to 140; the sequence is RGGAAGEDEA…SVKNFREEPE (118 aa). The span at 28–45 shows a compositional bias: acidic residues; that stretch reads GEDEAGGPEGDPEEEDSQ. Polar residues-rich tracts occupy residues 47–60 and 111–128; these read ETKSLSFSSDSEGN and SKTCSKPSENEVPQQAID. Residues 130–140 are compositionally biased toward basic and acidic residues; it reads HSVKNFREEPE. A phosphoserine mark is found at Ser-147 and Ser-153. The interaction with TDRD7 stretch occupies residues 152–259; sequence FSIETKDSTD…TNAAVEGTPL (108 aa). The tract at residues 206–427 is interaction with YEATS4; it reads EASAEADLKA…DPDNFDESMD (222 aa). 2 consecutive SPAZ domains span residues 215-297 and 359-507; these read AGNS…TPGT and SKSA…TDEE. A disordered region spans residues 215 to 457; it reads AGNSCPELVP…VNEILESPKK (243 aa). A Bipartite nuclear localization signal 1 motif is present at residues 226–241; it reads RRSKLRKPKPVPLRKK. Residues 226-242 are compositionally biased toward basic residues; that stretch reads RRSKLRKPKPVPLRKKA. Ser-228 is modified (phosphoserine; by AURKC). Ser-248 and Ser-276 each carry phosphoserine. 3 stretches are compositionally biased toward polar residues: residues 296 to 305, 377 to 413, and 431 to 447; these read GTLSSDTNDS, LSQTSSKPDPSQWESPSFNPFGSHSVLQNSPPLSSEG, and PTTTLTSSDFCSPTGNH. Ser-381 and Ser-406 each carry phosphoserine. The short motif at 455–471 is the Bipartite nuclear localization signal 2 element; the sequence is PKKAKSRLITSGCKVKK. Ser-483 carries the phosphoserine modification. Residues 493 to 526 are disordered; it reads ISDISNRDGHATDEEKLASTSCGQKSAGAEVKGE. The segment covering 497–509 has biased composition (basic and acidic residues); sequence SNRDGHATDEEKL. The residue at position 533 (Tyr-533) is a Phosphotyrosine. Ser-591 carries the post-translational modification Phosphoserine. Residues 610–805 are a coiled coil; it reads IREEIITKEI…ELIAKLGKTD (196 aa). The tract at residues 701–805 is interaction with CH-TOG; it reads VLEGFKKNEE…ELIAKLGKTD (105 aa).

The protein belongs to the TACC family. Interacts with KIAA0097/CH-TOG and with the oncogenic transcription factor YEATS4. Interacts with AURKA, AURKB and AURKC. Interacts with LSM7, TDRD7 and SNRPG. Interacts with GCN5L2 and PCAF. Interacts with the thyroid hormone receptors THRB and THRA, predominantly with isoform alpha-2. The interaction with THRA isoform alpha-1 and THRB is decreased in the presence of thyroid hormone T3. Also interacts with other nuclear receptors, including ESR1, NR3C1, PPARG, RARA and RXRA, preferentially in the absence of their hormonal ligands. Isoform 1 is heavily phosphorylated; isoform 6 is not. As to expression, isoform 1, isoform 3 and isoform 5 are ubiquitous. Isoform 2 is strongly expressed in the brain, weakly detectable in lung and colon, and overexpressed in gastric cancer. Isoform 4 is not detected in normal tissues, but strong expression was found in gastric cancer tissues. Down-regulated in a subset of cases of breast cancer.

It localises to the cytoplasm. Its subcellular location is the nucleus. The protein localises to the cytoskeleton. The protein resides in the microtubule organizing center. It is found in the centrosome. It localises to the midbody. Its subcellular location is the membrane. In terms of biological role, involved in transcription regulation induced by nuclear receptors, including in T3 thyroid hormone and all-trans retinoic acid pathways. Might promote the nuclear localization of the receptors. Likely involved in the processes that promote cell division prior to the formation of differentiated tissues. In Homo sapiens (Human), this protein is Transforming acidic coiled-coil-containing protein 1 (TACC1).